We begin with the raw amino-acid sequence, 967 residues long: MCPALSTDLKQEVLTDPYESFMHHHLQYYGYFRGLEPREQFKLPVQRCRKVVTDSDSDMPSSQEDQKKLVYSLLLDSPVFKSRQLVFEDQEGKIIPRLREPKDLYGSSSQDGCWQQARWPSECEVIKQDISHIEWDPTDREIFYKPTGNEPKPPVVSEGTGAVVYEISPAHKGSYFKGSRTGGRKCSHRKNQKVQCNNDLQFESRFESGNLQKAMKVGMYEYELTLRTDLYTSKHTQWFYFQVKNTRKGVPYRFTITNLMKTNSLYNEGLKPLLYSQQDAALKGIGWRREGKDIKYYKNTRSLDGRSLYSLTWTFEFPHDDDICYFAHCYPYTYSDLQRDLKSKISDPACSHYCKLRTLCRSLAGNSIYLLTITSPSTNLTTGAKKKAIVVTARVHPGETNGSWMMKGFLDFILSDSPDAQLLRDTFIFKVVPMLNPDGVIVGNYRCSLSGRDLNRNYKSMLKDAFPCIWHTRSMVKRLLTEREVILYCDFHGHSRKNNVFMYGCNSKGHPLTKLHERIFPLMLSKNAPDKFLFKGCKFKVQKSKEGTGRIDMWKQGIQNSYTMEATFGGSTLGNRKDTHFTTQDLKSMGHHFCDTLLDYCDPDSSKFKLCLSELQRLVEEDIREKMKQLGRDMDSDFTLSDITLSDLESSTSGSNSSESDGLPAHLVDIAEKFYQKKKRRLRSRKERNSLYQKRNARQKQKLHEAVEVSEPAAHIVRNELTKSSGKRKKEQKVAKIKFQEDLVPQTEENLTTAAPTEKSSMLYSRKPESVSMKTQMINSLPTSCVRDFMDLDHVCERQMTIRPRPSANGNRLPLIITVVQQSTLPPVPKGISALKQHPPPFHSILDQSGDQLTVADHVFRRDKSVAKRGFSSAGIRPYCSGISGEKQKVLDGSIVPLDLHLSLSPEVHRQNKPRQEPLITLGSTEYFEGFLPKPKTDPVRRFPGISSSEPHFPNSSEDITVRNTMK.

A Peptidase M14 domain is found at 330–601; that stretch reads YPYTYSDLQR…HFCDTLLDYC (272 aa). Residues H396, E399, and H492 each contribute to the Zn(2+) site. The active-site Proton donor/acceptor is the E565. Disordered regions lie at residues 679-706 and 944-967; these read KRRLRSRKERNSLYQKRNARQKQKLHEA and PGISSSEPHFPNSSEDITVRNTMK. Polar residues predominate over residues 946 to 967; the sequence is ISSSEPHFPNSSEDITVRNTMK.

It belongs to the peptidase M14 family. Requires Zn(2+) as cofactor.

The protein localises to the cytoplasm. It is found in the cytosol. The protein resides in the cytoskeleton. Its subcellular location is the microtubule organizing center. It localises to the centrosome. The protein localises to the centriole. It is found in the cilium basal body. The catalysed reaction is (L-glutamyl)(n+1)-gamma-L-glutamyl-L-glutamyl-[protein] + H2O = (L-glutamyl)(n)-gamma-L-glutamyl-L-glutamyl-[protein] + L-glutamate. Functionally, metallocarboxypeptidase that mediates deglutamylation of target proteins. Catalyzes the deglutamylation of polyglutamate side chains generated by post-translational polyglutamylation in proteins such as tubulins. Also removes gene-encoded polyglutamates from the carboxy-terminus of target proteins such as MYLK. Does not show detyrosinase or deglycylase activities from the carboxy-terminus of tubulin. Metallocarboxypeptidase that mediates deglutamylation of tubulin and non-tubulin target proteins. Catalyzes the removal of polyglutamate side chains present on the gamma-carboxyl group of glutamate residues within the C-terminal tail of tubulin protein. Specifically cleaves tubulin long-side-chains, while it is not able to remove the branching point glutamate. Also catalyzes the removal of polyglutamate residues from the carboxy-terminus of non-tubulin proteins. The chain is Cytosolic carboxypeptidase 2 (agbl2) from Xenopus tropicalis (Western clawed frog).